We begin with the raw amino-acid sequence, 298 residues long: uncharacterized protein (298 aa).

A run of 10 helical transmembrane segments spans residues 5–25 (ILFGVSMILLANLCFGIMSAF), 36–56 (MENVFYRSITMTLLLLLIYPF), 76–96 (VVVGGLAMLAFFYNIEKISLA), 97–117 (TATAFSQCAPIYTVLLSPLLL), 124–144 (STLISACIGIVGVVLISDPSV), 147–167 (VGPVEIFMGILSGIFVSLAYI), 181–201 (VILAFAFGMSLLGLVGMFIDI), 216–236 (ILWISLIGISGTLGQYFLTYA), 244–264 (IIAPIEYTRIVWGLLFGLYLG), and 272–292 (SSLGVALILCSGLLIALPALL). In terms of domain architecture, EamA 1 spans 17–141 (LCFGIMSAFV…GIVGVVLISD (125 aa)). The region spanning 183–288 (LAFAFGMSLL…ILCSGLLIAL (106 aa)) is the EamA 2 domain.

The protein belongs to the EamA transporter family.

The protein localises to the cell membrane. This is an uncharacterized protein from Helicobacter pylori (strain ATCC 700392 / 26695) (Campylobacter pylori).